Consider the following 330-residue polypeptide: MKKRLSLDRRFLPYIKKAGGVLVKKQMGAYVSLAAAMAIVGSSVVVGKLMVERIPVFLSSGLRFLIASVVLLMLLFCIEKGFPALTKKDVFVLLVQSFTGVFLFSICLLYGVQYTTGTESGILTSTTPMLIGILSFFLLREKIEKKTLIGILLAVCGVMAINLFGAGSQDGTPHALFGNMLIIAAVIGEALFTLMAKLLSPHISALAISTFVSLFGFLFFLPFALFEASSFDYSVPTVLDWSYVLYYALFVTVLAFYLWYSGVTKVPAGVSGIFTSVLPVSAVILSGVILKEPFEFVHFIGIACVIGGIFVTVIKKKQPDAYPAAEEKTL.

10 consecutive transmembrane segments (helical) span residues 27 to 47, 56 to 76, 90 to 110, 119 to 139, 147 to 167, 176 to 196, 206 to 226, 243 to 263, 270 to 290, and 294 to 314; these read MGAY…VVVG, VFLS…MLLF, VFVL…CLLY, ESGI…FFLL, TLIG…FGAG, LFGN…TLMA, LAIS…FALF, YVLY…YSGV, VSGI…GVIL, and FEFV…VTVI. EamA domains follow at residues 38-163 and 187-314; these read AIVG…AINL and IGEA…VTVI.

It belongs to the EamA transporter family.

The protein resides in the cell membrane. This is an uncharacterized protein from Bacillus subtilis (strain 168).